A 410-amino-acid chain; its full sequence is Putative ribosomal large subunit pseudouridine synthase SVR1, chloroplastic (410 aa).

Residues 1-35 (MASVAASSSISFAASFLKIKAFPLSPRFFPIRTLR) constitute a chloroplast transit peptide. The interval 96–143 (HNLAIDATTQNPKKKDKSKKKQPQATSSSSATTTASSPASHSEVKPKL) is disordered. The segment covering 107–117 (PKKKDKSKKKQ) has biased composition (basic residues). Positions 118 to 135 (PQATSSSSATTTASSPAS) are enriched in low complexity. An S4 RNA-binding domain is found at 160–229 (QRLSKVLAAA…PKVYFALNKP (70 aa)). Asp274 acts as the Nucleophile in catalysis.

It belongs to the pseudouridine synthase RsuA family. In terms of tissue distribution, highly expressed in young seedlings. Expressed in roots, rosette leaves, cauline leaves, stems and flowers.

The protein resides in the plastid. It is found in the chloroplast. In terms of biological role, responsible for synthesis of pseudouridine in chloroplastic 23S ribosomal RNA. Necessary for normal chloroplast rRNA processing and translation. Required for normal chloroplast development and maintenance. May function in other plastids, such as root amyloplasts. In Arabidopsis thaliana (Mouse-ear cress), this protein is Putative ribosomal large subunit pseudouridine synthase SVR1, chloroplastic (SVR1).